Here is a 113-residue protein sequence, read N- to C-terminus: Prefoldin subunit beta (113 aa).

The protein belongs to the prefoldin subunit beta family. Heterohexamer of two alpha and four beta subunits.

The protein localises to the cytoplasm. Functionally, molecular chaperone capable of stabilizing a range of proteins. Seems to fulfill an ATP-independent, HSP70-like function in archaeal de novo protein folding. In Methanococcus maripaludis (strain C7 / ATCC BAA-1331), this protein is Prefoldin subunit beta.